A 339-amino-acid polypeptide reads, in one-letter code: tRNA pseudouridine synthase D (339 aa).

The active-site Nucleophile is the D80. The TRUD domain maps to 155-311; that stretch reads GFPNYFTEQR…AKGFSWAFEP (157 aa).

The protein belongs to the pseudouridine synthase TruD family.

It catalyses the reaction uridine(13) in tRNA = pseudouridine(13) in tRNA. In terms of biological role, responsible for synthesis of pseudouridine from uracil-13 in transfer RNAs. This chain is tRNA pseudouridine synthase D, found in Haemophilus influenzae (strain 86-028NP).